The following is a 231-amino-acid chain: Probable septum site-determining protein MinC (231 aa).

Residues 100-125 form a disordered region; the sequence is EGKEKSPRPAPAPQAPAQNTTPVTKT.

It belongs to the MinC family. As to quaternary structure, interacts with MinD and FtsZ.

In terms of biological role, cell division inhibitor that blocks the formation of polar Z ring septums. Rapidly oscillates between the poles of the cell to destabilize FtsZ filaments that have formed before they mature into polar Z rings. Prevents FtsZ polymerization. The protein is Probable septum site-determining protein MinC of Escherichia coli O81 (strain ED1a).